The following is a 246-amino-acid chain: Carboxy-S-adenosyl-L-methionine synthase (246 aa).

S-adenosyl-L-methionine contacts are provided by residues tyrosine 43, glycine 68–serine 70, aspartate 93–asparagine 94, aspartate 121–isoleucine 122, asparagine 136, and arginine 203.

The protein belongs to the class I-like SAM-binding methyltransferase superfamily. Cx-SAM synthase family. Homodimer.

It carries out the reaction prephenate + S-adenosyl-L-methionine = carboxy-S-adenosyl-L-methionine + 3-phenylpyruvate + H2O. Functionally, catalyzes the conversion of S-adenosyl-L-methionine (SAM) to carboxy-S-adenosyl-L-methionine (Cx-SAM). The protein is Carboxy-S-adenosyl-L-methionine synthase of Vibrio cholerae serotype O1 (strain ATCC 39541 / Classical Ogawa 395 / O395).